A 215-amino-acid chain; its full sequence is uncharacterized protein (215 aa).

This is an uncharacterized protein from Methanocaldococcus jannaschii (strain ATCC 43067 / DSM 2661 / JAL-1 / JCM 10045 / NBRC 100440) (Methanococcus jannaschii).